Here is a 320-residue protein sequence, read N- to C-terminus: Minor outer capsid protein P9 (320 aa).

Residues 297-320 are disordered; sequence RNDDEEELAGSEFTSLLSDDGRMG.

It belongs to the phytoreovirus minor outer capsid protein P9 family.

The protein resides in the virion. It is found in the host cytoplasm. Its function is as follows. Minor outer capsid protein. In Rice gall dwarf virus (RGDV), this protein is Minor outer capsid protein P9.